A 1114-amino-acid chain; its full sequence is Hephaestin-like protein (1114 aa).

Residues 1-26 (MMDRSNAAFVLTACFIFSQLICHVAA) form the signal peptide. Plastocyanin-like domains lie at 27 to 210 (ITRT…LICR), 218 to 365 (QQSG…VTKC), 380 to 562 (KRTY…LLTC), 572 to 719 (TRKD…VNTC), 730 to 915 (KTRD…LIIC), and 924 to 1114 (TEER…LLKA). Topologically, residues 27–1091 (ITRTYYIAAV…KTTPKPITAA (1065 aa)) are extracellular. The N-linked (GlcNAc...) asparagine glycan is linked to Asn-121. Residues His-129, His-131, His-189, and His-191 each coordinate Cu cation. An intrachain disulfide couples Cys-183 to Cys-209. N-linked (GlcNAc...) asparagine glycosylation is present at Asn-236. A disulfide bridge links Cys-284 with Cys-365. The Cu cation site is built by His-303, Cys-346, and His-351. Residues Asn-361, Asn-478, and Asn-489 are each glycosylated (N-linked (GlcNAc...) asparagine). 2 cysteine pairs are disulfide-bonded: Cys-536–Cys-562 and Cys-638–Cys-719. Positions 657, 700, 705, and 710 each coordinate Cu cation. Asn-831 carries an N-linked (GlcNAc...) asparagine glycan. Cys-889 and Cys-915 are oxidised to a cystine. N-linked (GlcNAc...) asparagine glycosylation is present at Asn-944. 8 residues coordinate Cu cation: His-1014, His-1017, His-1019, His-1059, Cys-1060, His-1061, His-1065, and Met-1070. A helical membrane pass occupies residues 1092–1112 (SSFVTSSIFIYLSFPVLAMLL). Residues 1113-1114 (KA) are Cytoplasmic-facing.

Belongs to the multicopper oxidase family. Requires Cu cation as cofactor. In terms of tissue distribution, component of the acid-insoluble and acid-soluble organic matrix of the aragonitic skeleton (at protein level).

Its subcellular location is the membrane. Its function is as follows. May function as a ferroxidase and may be involved in copper transport and homeostasis. This chain is Hephaestin-like protein, found in Acropora millepora (Staghorn coral).